An 874-amino-acid chain; its full sequence is Alanine--tRNA ligase (874 aa).

Zn(2+)-binding residues include histidine 562, histidine 566, cysteine 664, and histidine 668.

Belongs to the class-II aminoacyl-tRNA synthetase family. Requires Zn(2+) as cofactor.

It localises to the cytoplasm. The catalysed reaction is tRNA(Ala) + L-alanine + ATP = L-alanyl-tRNA(Ala) + AMP + diphosphate. Catalyzes the attachment of alanine to tRNA(Ala) in a two-step reaction: alanine is first activated by ATP to form Ala-AMP and then transferred to the acceptor end of tRNA(Ala). Also edits incorrectly charged Ser-tRNA(Ala) and Gly-tRNA(Ala) via its editing domain. The polypeptide is Alanine--tRNA ligase (Shewanella sp. (strain MR-7)).